The primary structure comprises 315 residues: Acetyl-coenzyme A carboxylase carboxyl transferase subunit alpha (315 aa).

The 255-residue stretch at 35–289 folds into the CoA carboxyltransferase C-terminal domain; it reads KLSKKRFELM…RKAVAAELKI (255 aa).

It belongs to the AccA family. Acetyl-CoA carboxylase is a heterohexamer composed of biotin carboxyl carrier protein (AccB), biotin carboxylase (AccC) and two subunits each of ACCase subunit alpha (AccA) and ACCase subunit beta (AccD).

Its subcellular location is the cytoplasm. It carries out the reaction N(6)-carboxybiotinyl-L-lysyl-[protein] + acetyl-CoA = N(6)-biotinyl-L-lysyl-[protein] + malonyl-CoA. The protein operates within lipid metabolism; malonyl-CoA biosynthesis; malonyl-CoA from acetyl-CoA: step 1/1. In terms of biological role, component of the acetyl coenzyme A carboxylase (ACC) complex. First, biotin carboxylase catalyzes the carboxylation of biotin on its carrier protein (BCCP) and then the CO(2) group is transferred by the carboxyltransferase to acetyl-CoA to form malonyl-CoA. In Francisella tularensis subsp. mediasiatica (strain FSC147), this protein is Acetyl-coenzyme A carboxylase carboxyl transferase subunit alpha.